Consider the following 228-residue polypeptide: Adenosylcobinamide-GDP ribazoletransferase (228 aa).

6 helical membrane-spanning segments follow: residues 24–44 (VWML…ILYL), 50–70 (NVLS…DGLA), 96–116 (IAGT…LFSA), 117–137 (PFYS…LALA), 159–176 (VFLG…ILLY), and 181–198 (IFAL…KISL).

It belongs to the CobS family. It depends on Mg(2+) as a cofactor.

It localises to the cell membrane. It carries out the reaction alpha-ribazole + adenosylcob(III)inamide-GDP = adenosylcob(III)alamin + GMP + H(+). The catalysed reaction is alpha-ribazole 5'-phosphate + adenosylcob(III)inamide-GDP = adenosylcob(III)alamin 5'-phosphate + GMP + H(+). It functions in the pathway cofactor biosynthesis; adenosylcobalamin biosynthesis; adenosylcobalamin from cob(II)yrinate a,c-diamide: step 7/7. Joins adenosylcobinamide-GDP and alpha-ribazole to generate adenosylcobalamin (Ado-cobalamin). Also synthesizes adenosylcobalamin 5'-phosphate from adenosylcobinamide-GDP and alpha-ribazole 5'-phosphate. The sequence is that of Adenosylcobinamide-GDP ribazoletransferase from Pyrococcus furiosus (strain ATCC 43587 / DSM 3638 / JCM 8422 / Vc1).